The chain runs to 452 residues: uncharacterized protein (452 aa).

Positions 1–452 are disordered; that stretch reads MTAVSSNRNP…LRKPEADTAL (452 aa). Polar residues-rich tracts occupy residues 29 to 41, 95 to 111, 129 to 144, and 163 to 176; these read RTGT…VSSN, SPQT…SNRN, SPQT…SSNR, and SPQT…AVSS. Positions 177 to 193 are enriched in basic and acidic residues; it reads NRDHEDDGCLLKQESRG. 7 stretches are compositionally biased toward polar residues: residues 197-212, 231-245, 265-280, 299-314, 333-347, 376-394, and 412-426; these read SPQT…SSNR, SPQT…VSSN, SPQT…VSSK, and TAVS…SNRN. Positions 439–452 are enriched in basic and acidic residues; it reads EPQELRKPEADTAL.

This is an uncharacterized protein from Homo sapiens (Human).